The following is a 679-amino-acid chain: Shutoff protein (679 aa).

The interval 178 to 232 is binding to host EIF4G; the sequence is LFDYLIGESQDPNDLDSEYKLAFTDEDLPQEGQAEKTKQRETLGAVATFGAVLLS. Residues 235 to 353 form the RRM domain; it reads RLFTHPVVIK…ELAGANYAEA (119 aa). 2 positions are modified to phosphotyrosine; by host: Tyr252 and Tyr564. The segment at 552-679 is disordered; sequence REKSILKRGG…SLQGTRRESS (128 aa). Over residues 661 to 679 the composition is skewed to basic and acidic residues; it reads PRQETAEKESLQGTRRESS.

The protein belongs to the adenoviridae shutoff protein family. In terms of assembly, monomer. Interacts with hexon protein; this interaction allows chaperoning and trimerization of hexon proteins. Interacts (via N-terminus) with host initiation factor EIF4G (via C-terminus). Interacts (via RRM domain) with viral mRNAs that contain the tripartite leader; this interaction allows ribosome shunting and expression of viral late mRNAs. Might be cleaved by the viral protease. In terms of processing, phosphorylated. Tyrosine phosphorylation enhances preferential binding to tripartite leader mRNAs and allows ribosome shunting. Post-translationally, methylated. Asymmetric dimethylation by host PRMT1 of the Arg/Gly-rich region may regulate shutoff protein binding to hexon and promote the capsid assembly in the nucleus.

It localises to the host cytoplasm. Its function is as follows. Protein that inhibits host translation while promoting late viral translation by ribosome shunting. Blocks host cap-dependent translation by binding to eIF4G, displacing MKNK1 from cap initiation complexes and preventing EIF4E phosphorylation. Binds to the tripartite leader sequence of viral late mRNAs and recruits host eIF4G, PABPC1/poly-A binding protein and 40S ribosomes subunits on viral mRNAs, allowing ribosome shunting and efficient translation of late viral mRNAs even though conventional translation via ribosome scanning from the cap has been shut off in the host cell. During assembly, acts as a chaperone protein that helps hexon proteins assembly into trimers. The polypeptide is Shutoff protein (Snake adenovirus serotype 1 (SnAdV-1)).